The sequence spans 339 residues: Ketol-acid reductoisomerase (NADP(+)) (339 aa).

The 182-residue stretch at 1 to 182 (MRVYYDRDAD…GGGRAGIIET (182 aa)) folds into the KARI N-terminal Rossmann domain. NADP(+) contacts are provided by residues 24–27 (YGSQ), R48, S51, T53, and 83–86 (DELQ). H108 is a catalytic residue. Position 134 (G134) interacts with NADP(+). Positions 183-328 (TFKEECETDL…AKLRGMMPWI (146 aa)) constitute a KARI C-terminal knotted domain. Mg(2+) contacts are provided by D191, E195, E227, and E231. Residue S252 coordinates substrate.

Belongs to the ketol-acid reductoisomerase family. Mg(2+) is required as a cofactor.

The enzyme catalyses (2R)-2,3-dihydroxy-3-methylbutanoate + NADP(+) = (2S)-2-acetolactate + NADPH + H(+). It carries out the reaction (2R,3R)-2,3-dihydroxy-3-methylpentanoate + NADP(+) = (S)-2-ethyl-2-hydroxy-3-oxobutanoate + NADPH + H(+). It participates in amino-acid biosynthesis; L-isoleucine biosynthesis; L-isoleucine from 2-oxobutanoate: step 2/4. The protein operates within amino-acid biosynthesis; L-valine biosynthesis; L-valine from pyruvate: step 2/4. Involved in the biosynthesis of branched-chain amino acids (BCAA). Catalyzes an alkyl-migration followed by a ketol-acid reduction of (S)-2-acetolactate (S2AL) to yield (R)-2,3-dihydroxy-isovalerate. In the isomerase reaction, S2AL is rearranged via a Mg-dependent methyl migration to produce 3-hydroxy-3-methyl-2-ketobutyrate (HMKB). In the reductase reaction, this 2-ketoacid undergoes a metal-dependent reduction by NADPH to yield (R)-2,3-dihydroxy-isovalerate. This chain is Ketol-acid reductoisomerase (NADP(+)), found in Methylorubrum populi (strain ATCC BAA-705 / NCIMB 13946 / BJ001) (Methylobacterium populi).